Here is a 225-residue protein sequence, read N- to C-terminus: Cell division protein SepF (225 aa).

The interval 22–116 is disordered; it reads EYLDEPEPAR…TRGALAVDTR (95 aa). 2 stretches are compositionally biased toward basic and acidic residues: residues 28 to 54 and 77 to 86; these read EPARRPARPARDSGRDPYLDRDDRDFA and RYDGPRHSSR.

Belongs to the SepF family. As to quaternary structure, homodimer. Interacts with FtsZ.

It localises to the cytoplasm. Functionally, cell division protein that is part of the divisome complex and is recruited early to the Z-ring. Probably stimulates Z-ring formation, perhaps through the cross-linking of FtsZ protofilaments. Its function overlaps with FtsA. The polypeptide is Cell division protein SepF (Rhodococcus jostii (strain RHA1)).